The following is a 427-amino-acid chain: Glutamate-1-semialdehyde 2,1-aminomutase 2 (427 aa).

Lysine 267 carries the post-translational modification N6-(pyridoxal phosphate)lysine.

The protein belongs to the class-III pyridoxal-phosphate-dependent aminotransferase family. HemL subfamily. In terms of assembly, homodimer. It depends on pyridoxal 5'-phosphate as a cofactor.

It is found in the cytoplasm. The enzyme catalyses (S)-4-amino-5-oxopentanoate = 5-aminolevulinate. It participates in porphyrin-containing compound metabolism; protoporphyrin-IX biosynthesis; 5-aminolevulinate from L-glutamyl-tRNA(Glu): step 2/2. The chain is Glutamate-1-semialdehyde 2,1-aminomutase 2 from Staphylococcus saprophyticus subsp. saprophyticus (strain ATCC 15305 / DSM 20229 / NCIMB 8711 / NCTC 7292 / S-41).